We begin with the raw amino-acid sequence, 131 residues long: Mediator of RNA polymerase II transcription subunit 31 (131 aa).

Ala2 carries the post-translational modification N-acetylalanine.

It belongs to the Mediator complex subunit 31 family. As to quaternary structure, component of the Mediator complex, which is composed of MED1, MED4, MED6, MED7, MED8, MED9, MED10, MED11, MED12, MED13, MED13L, MED14, MED15, MED16, MED17, MED18, MED19, MED20, MED21, MED22, MED23, MED24, MED25, MED26, MED27, MED29, MED30, MED31, CCNC, CDK8 and CDC2L6/CDK11. The MED12, MED13, CCNC and CDK8 subunits form a distinct module termed the CDK8 module. Mediator containing the CDK8 module is less active than Mediator lacking this module in supporting transcriptional activation. Individual preparations of the Mediator complex lacking one or more distinct subunits have been variously termed ARC, CRSP, DRIP, PC2, SMCC and TRAP.

It localises to the nucleus. Functionally, component of the Mediator complex, a coactivator involved in the regulated transcription of nearly all RNA polymerase II-dependent genes. Mediator functions as a bridge to convey information from gene-specific regulatory proteins to the basal RNA polymerase II transcription machinery. Mediator is recruited to promoters by direct interactions with regulatory proteins and serves as a scaffold for the assembly of a functional preinitiation complex with RNA polymerase II and the general transcription factors. The chain is Mediator of RNA polymerase II transcription subunit 31 (MED31) from Homo sapiens (Human).